The following is a 187-amino-acid chain: Large ribosomal subunit protein uL22 (187 aa).

Belongs to the universal ribosomal protein uL22 family.

The sequence is that of Large ribosomal subunit protein uL22 (RPL17) from Theileria parva (East coast fever infection agent).